The following is a 231-amino-acid chain: Probable GTP-binding protein EngB (231 aa).

The region spanning 51 to 231 (DLSEIAFAGR…RAQLAALASP (181 aa)) is the EngB-type G domain. GTP is bound by residues 59-66 (GRSNVGKS), 86-90 (GRTQE), 109-112 (DLPG), 176-179 (TKAD), and 210-212 (TSS). Ser66 and Thr88 together coordinate Mg(2+).

The protein belongs to the TRAFAC class TrmE-Era-EngA-EngB-Septin-like GTPase superfamily. EngB GTPase family. Requires Mg(2+) as cofactor.

Functionally, necessary for normal cell division and for the maintenance of normal septation. This is Probable GTP-binding protein EngB from Rhodospirillum rubrum (strain ATCC 11170 / ATH 1.1.1 / DSM 467 / LMG 4362 / NCIMB 8255 / S1).